The sequence spans 256 residues: Phosphate import ATP-binding protein PstB (256 aa).

Residues 10-251 (IRTVNVNFYY…PEQKQTEDYI (242 aa)) form the ABC transporter domain. 42–49 (GPSGCGKS) contributes to the ATP binding site.

The protein belongs to the ABC transporter superfamily. Phosphate importer (TC 3.A.1.7) family. In terms of assembly, the complex is composed of two ATP-binding proteins (PstB), two transmembrane proteins (PstC and PstA) and a solute-binding protein (PstS).

It is found in the cell inner membrane. It carries out the reaction phosphate(out) + ATP + H2O = ADP + 2 phosphate(in) + H(+). Its function is as follows. Part of the ABC transporter complex PstSACB involved in phosphate import. Responsible for energy coupling to the transport system. The sequence is that of Phosphate import ATP-binding protein PstB from Syntrophus aciditrophicus (strain SB).